Here is a 102-residue protein sequence, read N- to C-terminus: uncharacterized protein (102 aa).

Belongs to the Gram-positive plasmids replication protein type 2 family.

This is an uncharacterized protein from Staphylococcus aureus.